The following is an 84-amino-acid chain: Putative membrane protein insertion efficiency factor (84 aa).

The protein belongs to the UPF0161 family.

The protein localises to the cell inner membrane. Could be involved in insertion of integral membrane proteins into the membrane. The polypeptide is Putative membrane protein insertion efficiency factor (Shewanella amazonensis (strain ATCC BAA-1098 / SB2B)).